A 539-amino-acid polypeptide reads, in one-letter code: MESSLFSPSSSSYSSLFTAKPTRLLSPKPKFTFSIRSSIEKPKPKLETNSSKSQSWVSPDWLTTLTRTLSSGKNDESGIPIANAKLDDVADLLGGALFLPLYKWMNEYGPIYRLAAGPRNFVIVSDPAIAKHVLRNYPKYAKGLVAEVSEFLFGSGFAIAEGPLWTARRRAVVPSLHRRYLSVIVERVFCKCAERLVEKLQPYAEDGSAVNMEAKFSQMTLDVIGLSLFNYNFDSLTTDSPVIEAVYTALKEAELRSTDLLPYWKIDALCKIVPRQVKAEKAVTLIRETVEDLIAKCKEIVEREGERINDEEYVNDADPSILRFLLASREEVSSVQLRDDLLSMLVAGHETTGSVLTWTLYLLSKNSSALRKAQEEVDRVLEGRNPAFEDIKELKYITRCINESMRLYPHPPVLIRRAQVPDILPGNYKVNTGQDIMISVYNIHRSSEVWEKAEEFLPERFDIDGAIPNETNTDFKFIPFSGGPRKCVGDQFALMEAIVALAVFLQRLNVELVPDQTISMTTGATIHTTNGLYMKVSQR.

The transit peptide at 1–36 directs the protein to the chloroplast; that stretch reads MESSLFSPSSSSYSSLFTAKPTRLLSPKPKFTFSIR. Cysteine 487 contributes to the heme binding site.

It belongs to the cytochrome P450 family. It depends on heme as a cofactor.

Its subcellular location is the plastid. It localises to the chloroplast. The catalysed reaction is alpha-carotene + reduced [NADPH--hemoprotein reductase] + O2 = alpha-cryptoxanthin + oxidized [NADPH--hemoprotein reductase] + H2O + H(+). It carries out the reaction zeinoxanthin + reduced [NADPH--hemoprotein reductase] + O2 = lutein + oxidized [NADPH--hemoprotein reductase] + H2O + H(+). Its function is as follows. Heme-containing cytochrome P450 involved in the biosynthesis of xanthophylls. Specific for epsilon- and beta-ring hydroxylation of alpha-carotene. Has only a low activity toward the beta-rings of beta-carotene. The preferred substrate in planta is not alpha-carotene but the epsilon-ring of zeinoxanthin. Possesses a major beta-carotene hydroxylase activity in planta when depleted in its preferred substrate alpha-carotene. This chain is Carotene epsilon-monooxygenase, chloroplastic (CYP97C1), found in Arabidopsis thaliana (Mouse-ear cress).